The chain runs to 200 residues: 3-isopropylmalate dehydratase small subunit (200 aa).

This sequence belongs to the LeuD family. LeuD type 1 subfamily. Heterodimer of LeuC and LeuD.

It carries out the reaction (2R,3S)-3-isopropylmalate = (2S)-2-isopropylmalate. The protein operates within amino-acid biosynthesis; L-leucine biosynthesis; L-leucine from 3-methyl-2-oxobutanoate: step 2/4. Functionally, catalyzes the isomerization between 2-isopropylmalate and 3-isopropylmalate, via the formation of 2-isopropylmaleate. The protein is 3-isopropylmalate dehydratase small subunit of Methylobacterium radiotolerans (strain ATCC 27329 / DSM 1819 / JCM 2831 / NBRC 15690 / NCIMB 10815 / 0-1).